A 444-amino-acid chain; its full sequence is 23S rRNA (uracil(1939)-C(5))-methyltransferase RlmD (444 aa).

A TRAM domain is found at Arg5 to Gly67. [4Fe-4S] cluster contacts are provided by Cys80, Cys86, Cys89, and Cys168. 6 residues coordinate S-adenosyl-L-methionine: Gln276, Phe305, Asn310, Glu326, Asp353, and Asp374. Cys400 acts as the Nucleophile in catalysis.

It belongs to the class I-like SAM-binding methyltransferase superfamily. RNA M5U methyltransferase family. RlmD subfamily.

The catalysed reaction is uridine(1939) in 23S rRNA + S-adenosyl-L-methionine = 5-methyluridine(1939) in 23S rRNA + S-adenosyl-L-homocysteine + H(+). Its function is as follows. Catalyzes the formation of 5-methyl-uridine at position 1939 (m5U1939) in 23S rRNA. This chain is 23S rRNA (uracil(1939)-C(5))-methyltransferase RlmD, found in Xanthomonas axonopodis pv. citri (strain 306).